The sequence spans 319 residues: MQITFLGTSSGVPTRSRNVSSVALRLPQRAELWLFDCGEGTQHQIMRSELKISQLSRIFITHMHGDHIFGLMGLLATCGLAGNVERIDIYGPPGLNDYIQSASRYSYTHFSYPIKVHAIRPGVIYEDDYFTVSCGNLHHRITAFGYRVAEKDRTGRFDVEKAKALDIPSGRIYGQLKRGETVILDDGRVIDGTQLCGPTEIGRKIAYCTDTIYCDGAVELAHDADVLIHEATFAHQDADMAFQRLHSTTTMAAQTALAAGAHRLIMSHFSPRYAPGNTLELKDLLKEARAIFPRTDMAYDFMIHEVPRRREVELTKVGV.

His-62, His-64, Asp-66, His-67, His-139, Asp-210, and His-268 together coordinate Zn(2+). Asp-66 serves as the catalytic Proton acceptor.

This sequence belongs to the RNase Z family. Homodimer. It depends on Zn(2+) as a cofactor.

It catalyses the reaction Endonucleolytic cleavage of RNA, removing extra 3' nucleotides from tRNA precursor, generating 3' termini of tRNAs. A 3'-hydroxy group is left at the tRNA terminus and a 5'-phosphoryl group is left at the trailer molecule.. In terms of biological role, zinc phosphodiesterase, which displays some tRNA 3'-processing endonuclease activity. Probably involved in tRNA maturation, by removing a 3'-trailer from precursor tRNA. This chain is Ribonuclease Z, found in Nostoc punctiforme (strain ATCC 29133 / PCC 73102).